Consider the following 560-residue polypeptide: MADADIRNDIYVLALENAVKHKAVPRAGAILGSVMGAHPELRSKAKEINALIPEILEEVAALSIEEREEKLMSLNPGAIEKMHEKKERSHELPDLPNAESGVVMRFAPNPSGPLHLGHARASVLNDYYVKKYGGKFYYRVEDTDPKRVDPSAYEMVSEDLAWLGIGITDVVYQSDRFAIYYEYARKLLELGGAYMCTCDNNEFREKKLKKIACPCREISVEENLKRFDDMLAGKYAEGEITLRVKTDIAHPDPAVRDFAAMRVLTSTPHPRKPAIFVYPLMNFSVAVDDHLLGMTHVIRGKDHIANTRRQEYIYNYFGWKMPYFYHYGRMSIAGLELSTSGMRKGINEGLYTGWDDIHLGTLRALARRGIQPEAVRAATIDIGMGDTDISFSWENLFAQNKAVIDAGADRYFFVPDAVEVEIAGAPKTEAHAPVYPNQPERGERVLPFTGRVLLPKSEMEKGGMLRLKDLFNINITGPNSAEYAGDSLAEARSQKAAIVQWLPTETAAPCSLLTPEGIQEGFSEPAVLGYLGRIVQFERVGFSKIDAVNDGKVIAYFTHR.

The 'HIGH' region signature appears at 108–118; the sequence is PNPSGPLHLGH.

This sequence belongs to the class-I aminoacyl-tRNA synthetase family. Glutamate--tRNA ligase type 2 subfamily.

The protein localises to the cytoplasm. It carries out the reaction tRNA(Glu) + L-glutamate + ATP = L-glutamyl-tRNA(Glu) + AMP + diphosphate. Catalyzes the attachment of glutamate to tRNA(Glu) in a two-step reaction: glutamate is first activated by ATP to form Glu-AMP and then transferred to the acceptor end of tRNA(Glu). The chain is Glutamate--tRNA ligase from Methanocorpusculum labreanum (strain ATCC 43576 / DSM 4855 / Z).